The chain runs to 359 residues: Molybdenum import ATP-binding protein ModC (359 aa).

In terms of domain architecture, ABC transporter spans 1–229; sequence MLELNFSQQL…SALRPWLQRE (229 aa). 31 to 38 serves as a coordination point for ATP; it reads GLSGAGKT. Residues 289-354 enclose the Mop domain; it reads SSSIRNILPV…IKSVSFNRQN (66 aa).

This sequence belongs to the ABC transporter superfamily. Molybdate importer (TC 3.A.1.8) family. In terms of assembly, the complex is composed of two ATP-binding proteins (ModC), two transmembrane proteins (ModB) and a solute-binding protein (ModA).

It is found in the cell inner membrane. The enzyme catalyses molybdate(out) + ATP + H2O = molybdate(in) + ADP + phosphate + H(+). Part of the ABC transporter complex ModABC involved in molybdenum import. Responsible for energy coupling to the transport system. This is Molybdenum import ATP-binding protein ModC from Yersinia pseudotuberculosis serotype I (strain IP32953).